The chain runs to 445 residues: Trigger factor (445 aa).

The region spanning 163–248 is the PPIase FKBP-type domain; it reads GDTVVIDYVG…IHEVKVKELP (86 aa). Residues 425–445 are disordered; the sequence is KEVESAKDDADKEASDAKADK.

The protein belongs to the FKBP-type PPIase family. Tig subfamily.

The protein resides in the cytoplasm. The catalysed reaction is [protein]-peptidylproline (omega=180) = [protein]-peptidylproline (omega=0). In terms of biological role, involved in protein export. Acts as a chaperone by maintaining the newly synthesized protein in an open conformation. Functions as a peptidyl-prolyl cis-trans isomerase. This is Trigger factor from Lacticaseibacillus casei (strain BL23) (Lactobacillus casei).